The following is a 107-amino-acid chain: SFAGLNDADVAAALAACAAADSFNHKAFFAKXXXXXXSPDDLKKXXXXLDQDKSGFLEEDELKLFLQNFSASARALTDAETKXXXXAGDADGDGMLGLDEFAVLVKQ.

At S1 the chain carries N-acetylserine. 2 consecutive EF-hand domains span residues 37-72 (XSPD…FSAS) and 89-107 (DADG…LVKQ). Positions 50, 52, 54, 56, 58, 61, 89, 91, 93, 95, and 100 each coordinate Ca(2+).

It belongs to the parvalbumin family.

Functionally, in muscle, parvalbumin is thought to be involved in relaxation after contraction. It binds two calcium ions. The sequence is that of Parvalbumin beta 2 from Oncorhynchus mykiss (Rainbow trout).